The primary structure comprises 201 residues: Large ribosomal subunit protein uL4 (201 aa).

The tract at residues 39–72 (KRQGTSAQKSRSEVIGSGKKPWRQKGTGRARAGS) is disordered.

The protein belongs to the universal ribosomal protein uL4 family. As to quaternary structure, part of the 50S ribosomal subunit.

Its function is as follows. One of the primary rRNA binding proteins, this protein initially binds near the 5'-end of the 23S rRNA. It is important during the early stages of 50S assembly. It makes multiple contacts with different domains of the 23S rRNA in the assembled 50S subunit and ribosome. Functionally, forms part of the polypeptide exit tunnel. The chain is Large ribosomal subunit protein uL4 from Wigglesworthia glossinidia brevipalpis.